Consider the following 409-residue polypeptide: Forkhead box protein A2 (409 aa).

The fork-head DNA-binding region spans 150–241 (AKPPYSYISL…GNMFENGCYL (92 aa)). Basic and acidic residues predominate over residues 250–262 (DKKLSKDPSRKTS). The tract at residues 250–315 (DKKLSKDPSR…AASPTSQAQH (66 aa)) is disordered. Over residues 263-286 (EGGSNSSSESCNGNESPHSNSSSN) the composition is skewed to low complexity.

It localises to the nucleus. May play a crucial role in specification of both the axial mesendoderm and the ventral nervous system. The sequence is that of Forkhead box protein A2 (foxa2) from Danio rerio (Zebrafish).